We begin with the raw amino-acid sequence, 260 residues long: Type III pantothenate kinase (260 aa).

6–13 (DAGNTNIV) contributes to the ATP binding site. 108-111 (GADR) provides a ligand contact to substrate. D110 functions as the Proton acceptor in the catalytic mechanism. D130 is a K(+) binding site. T133 contacts ATP. T187 provides a ligand contact to substrate.

It belongs to the type III pantothenate kinase family. In terms of assembly, homodimer. NH4(+) is required as a cofactor. The cofactor is K(+).

Its subcellular location is the cytoplasm. It catalyses the reaction (R)-pantothenate + ATP = (R)-4'-phosphopantothenate + ADP + H(+). Its pathway is cofactor biosynthesis; coenzyme A biosynthesis; CoA from (R)-pantothenate: step 1/5. Catalyzes the phosphorylation of pantothenate (Pan), the first step in CoA biosynthesis. The protein is Type III pantothenate kinase of Rhizorhabdus wittichii (strain DSM 6014 / CCUG 31198 / JCM 15750 / NBRC 105917 / EY 4224 / RW1) (Sphingomonas wittichii).